We begin with the raw amino-acid sequence, 365 residues long: tRNA N6-adenosine threonylcarbamoyltransferase (365 aa).

His119 and His123 together coordinate Fe cation. Residues 141–145, Asp174, Gly187, and Asn289 contribute to the substrate site; that span reads LVSGG. Residue Asp317 participates in Fe cation binding. The segment at 342 to 365 is disordered; that stretch reads ARPRWPLDSKSPAMLGSGKKGAKA.

Belongs to the KAE1 / TsaD family. The cofactor is Fe(2+).

It localises to the cytoplasm. It catalyses the reaction L-threonylcarbamoyladenylate + adenosine(37) in tRNA = N(6)-L-threonylcarbamoyladenosine(37) in tRNA + AMP + H(+). Functionally, required for the formation of a threonylcarbamoyl group on adenosine at position 37 (t(6)A37) in tRNAs that read codons beginning with adenine. Is involved in the transfer of the threonylcarbamoyl moiety of threonylcarbamoyl-AMP (TC-AMP) to the N6 group of A37, together with TsaE and TsaB. TsaD likely plays a direct catalytic role in this reaction. The protein is tRNA N6-adenosine threonylcarbamoyltransferase of Roseobacter denitrificans (strain ATCC 33942 / OCh 114) (Erythrobacter sp. (strain OCh 114)).